Reading from the N-terminus, the 551-residue chain is Eukaryotic translation initiation factor 3 subunit D-2 (551 aa).

Positions 108-152 are disordered; that stretch reads RTRGRTGRGTPNIASLGGSTAGGATASSTKYGKGRHTRNTQNVGR. Low complexity predominate over residues 115–136; that stretch reads RGTPNIASLGGSTAGGATASST. The segment at 290-304 is RNA gate; that stretch reads QFDLLTVNETSVEPP. The interval 527–551 is disordered; sequence PENAFDSDRDEEEESSEPLSNSNDN.

This sequence belongs to the eIF-3 subunit D family. As to quaternary structure, component of the eukaryotic translation initiation factor 3 (eIF-3) complex. The eIF-3 complex interacts with pix.

It localises to the cytoplasm. MRNA cap-binding component of the eukaryotic translation initiation factor 3 (eIF-3) complex, which is involved in protein synthesis of a specialized repertoire of mRNAs and, together with other initiation factors, stimulates binding of mRNA and methionyl-tRNAi to the 40S ribosome. The eIF-3 complex specifically targets and initiates translation of a subset of mRNAs involved in cell proliferation. In the eIF-3 complex, eif3d specifically recognizes and binds the 7-methylguanosine cap of a subset of mRNAs. The protein is Eukaryotic translation initiation factor 3 subunit D-2 of Drosophila simulans (Fruit fly).